Reading from the N-terminus, the 959-residue chain is Oxysterol-binding protein-related protein 6 (959 aa).

A disordered region spans residues 1–60 (MSSDEKGISPAHKTSTPTHRSASSSTSSQRESRQSIHVLERTASSSTEPSVSRQLLEPEP). Ser2 carries the N-acetylserine modification. The segment covering 14–29 (TSTPTHRSASSSTSSQ) has biased composition (low complexity). Residues 30-40 (RESRQSIHVLE) are compositionally biased toward basic and acidic residues. A Phosphoserine modification is found at Ser35. Polar residues predominate over residues 42 to 53 (TASSSTEPSVSR). The 96-residue stretch at 86–181 (PDRHEGFMLK…WVSKLRHHRL (96 aa)) folds into the PH domain. 2 positions are modified to phosphoserine: Ser190 and Ser290.

Belongs to the OSBP family. Homodimer. Interacts with OSBPL3. Expressed in skin, respiratory epithelium, small intestine epithelium, pancreas, striated muscle, brain, spinal ganglia, and nervous plexus of the intestine (at protein level). In the brain, specifically in the cerebellum, it is expressed in Purkinje and granule cells. Expressed in hepatocytes and macrophages.

It is found in the nucleus envelope. Its subcellular location is the cytoplasm. The protein resides in the cytosol. The protein localises to the endoplasmic reticulum membrane. It localises to the cell membrane. It is found in the endosome membrane. In terms of biological role, regulates cellular transport and efflux of cholesterol. Plays a role in phosphatidylinositol-4-phophate (PI4P) turnover at the neuronal membrane. Binds via its PH domain PI4P, phosphatidylinositol-4,5-diphosphate, phosphatidylinositol-3,4,5-triphosphate, and phosphatidic acid. Weakly binds 25-hydroxycholesterol. The polypeptide is Oxysterol-binding protein-related protein 6 (Osbpl6) (Mus musculus (Mouse)).